Here is a 115-residue protein sequence, read N- to C-terminus: Photosystem II reaction center Psb28 protein (115 aa).

Belongs to the Psb28 family. Part of the photosystem II complex.

The protein localises to the plastid. Its subcellular location is the chloroplast thylakoid membrane. This Pyropia yezoensis (Susabi-nori) protein is Photosystem II reaction center Psb28 protein.